A 401-amino-acid polypeptide reads, in one-letter code: GRIP domain-containing protein C119.12 (401 aa).

Residues N7–E296 are a coiled coil. The 52-residue stretch at N315 to Q366 folds into the GRIP domain.

Its subcellular location is the golgi apparatus lumen. This Schizosaccharomyces pombe (strain 972 / ATCC 24843) (Fission yeast) protein is GRIP domain-containing protein C119.12.